A 70-amino-acid chain; its full sequence is Beta sliding clamp (70 aa).

This sequence belongs to the beta sliding clamp family. In terms of assembly, forms a ring-shaped head-to-tail homodimer around DNA which binds and tethers DNA polymerases and other proteins to the DNA. The DNA replisome complex has a single clamp-loading complex (3 tau and 1 each of delta, delta', psi and chi subunits) which binds 3 Pol III cores (1 core on the leading strand and 2 on the lagging strand) each with a beta sliding clamp dimer. Additional proteins in the replisome are other copies of gamma, psi and chi, Ssb, DNA helicase and RNA primase.

The protein localises to the cytoplasm. In terms of biological role, confers DNA tethering and processivity to DNA polymerases and other proteins. Acts as a clamp, forming a ring around DNA (a reaction catalyzed by the clamp-loading complex) which diffuses in an ATP-independent manner freely and bidirectionally along dsDNA. Initially characterized for its ability to contact the catalytic subunit of DNA polymerase III (Pol III), a complex, multichain enzyme responsible for most of the replicative synthesis in bacteria; Pol III exhibits 3'-5' exonuclease proofreading activity. The beta chain is required for initiation of replication as well as for processivity of DNA replication. This is Beta sliding clamp (dnaN) from Rhodobacter capsulatus (Rhodopseudomonas capsulata).